The following is a 583-amino-acid chain: SHC-transforming protein 1 (583 aa).

Methionine 1 bears the N-acetylmethionine mark. Residues 1 to 92 are disordered; that stretch reads MDLLPPKPKY…EPGRAADDGE (92 aa). Positions 16–44 are enriched in low complexity; sequence ESLSSLEEGASGSTPPEELPSPSASSLGP. 2 positions are modified to phosphoserine: serine 36 and serine 139. The residue at position 154 (lysine 154) is an N6-acetyllysine. The 184-residue stretch at 156–339 folds into the PID domain; it reads MGPGVSYLVR…AGFDGSAWDE (184 aa). The interval 340–487 is CH1; that stretch reads EEEEPPDHQY…SMAEQLRGEP (148 aa). Tyrosine 349 and tyrosine 350 each carry phosphotyrosine. Residues 372-384 are compositionally biased toward low complexity; it reads AAPGAARPTAPNA. The interval 372–415 is disordered; that stretch reads AAPGAARPTAPNAQTPSHLGATLPVGQPVGGDPEVRKQMPPPPP. Tyrosine 427 carries the post-translational modification Phosphotyrosine. The residue at position 453 (serine 453) is a Phosphoserine. The SH2 domain occupies 488 to 579; sequence WFHGKLSRRE…GSELCLQQPV (92 aa).

In terms of assembly, interacts with CPNE3; this interaction may mediate the binding of CPNE3 with ERBB2. Interacts with the NPXY motif of tyrosine-phosphorylated IGF1R and INSR in vitro via the PID domain. Once activated, binds to GRB2. Interacts with tyrosine-phosphorylated CD3T and DDR2. Interacts with the N-terminal region of SH2B2. Interacts with phosphorylated LRP1 and IRS4. Interacts with INPP5D/SHIP1 and INPPL1/SHIP2. Interacts with TRIM31. Interacts with PTPN6/SHP (tyrosine phosphorylated). Identified in a complex containing FGFR4, NCAM1, CDH2, PLCG1, FRS2, SRC, SHC1, GAP43 and CTT. Interacts with ALK, GAB2, GRB7 and KIT. Interacts with FLT4 (tyrosine-phosphorylated). Interacts with EPHB1 and GRB2; activates the MAPK/ERK cascade to regulate cell migration. Interacts with PDGFRB (tyrosine-phosphorylated). Interacts with ERBB4. Interacts with TEK/TIE2 (tyrosine-phosphorylated). Interacts with the Trk receptors NTRK1, NTRK2 and NTRK3; in a phosphotyrosine-dependent manner. Interacts with PTK2/FAK1. Interacts with CEACAM1; this interaction is CEACAM1-phosphorylation-dependent and mediates interaction with EGFR or INSR resulting in decrease coupling of SHC1 to the MAPK3/ERK1-MAPK1/ERK2 pathway. Interacts (via PID domain) with PEAK1 (when phosphorylated at 'Tyr-1188'). Found in a complex with PPP1CA, PPP1CC, SHC1 and PEAK1. (Microbial infection) Interacts with herpes simplex virus 1 UL46. Phosphorylated by activated epidermal growth factor receptor. Phosphorylated in response to FLT4 and KIT signaling. Isoform p46Shc and isoform p52Shc are phosphorylated on tyrosine residues of the Pro-rich domain. Isoform p66Shc is phosphorylated on Ser-36 by PRKCB upon treatment with insulin, hydrogen peroxide or irradiation with ultraviolet light. Tyrosine phosphorylated in response to FLT3 signaling. Tyrosine phosphorylated by activated PTK2B/PYK2. Tyrosine phosphorylated by ligand-activated ALK. Tyrosine phosphorylated by ligand-activated PDGFRB. Tyrosine phosphorylated by TEK/TIE2. May be tyrosine phosphorylated by activated PTK2/FAK1; tyrosine phosphorylation was seen in an astrocytoma biopsy, where PTK2/FAK1 kinase activity is high, but not in normal brain tissue. Isoform p52Shc dephosphorylation by PTPN2 may regulate interaction with GRB2. Widely expressed. Expressed in neural stem cells but absent in mature neurons.

Its subcellular location is the cytoplasm. It is found in the cell junction. The protein localises to the focal adhesion. The protein resides in the mitochondrion matrix. It localises to the mitochondrion. Its function is as follows. Signaling adapter that couples activated growth factor receptors to signaling pathways. Participates in a signaling cascade initiated by activated KIT and KITLG/SCF. Isoform p46Shc and isoform p52Shc, once phosphorylated, couple activated receptor tyrosine kinases to Ras via the recruitment of the GRB2/SOS complex and are implicated in the cytoplasmic propagation of mitogenic signals. Isoform p46Shc and isoform p52Shc may thus function as initiators of the Ras signaling cascade in various non-neuronal systems. Isoform p66Shc does not mediate Ras activation, but is involved in signal transduction pathways that regulate the cellular response to oxidative stress and life span. Isoform p66Shc acts as a downstream target of the tumor suppressor p53 and is indispensable for the ability of stress-activated p53 to induce elevation of intracellular oxidants, cytochrome c release and apoptosis. The expression of isoform p66Shc has been correlated with life span. Participates in signaling downstream of the angiopoietin receptor TEK/TIE2, and plays a role in the regulation of endothelial cell migration and sprouting angiogenesis. The chain is SHC-transforming protein 1 (SHC1) from Homo sapiens (Human).